Reading from the N-terminus, the 307-residue chain is Tyrosine recombinase XerC (307 aa).

In terms of domain architecture, Core-binding (CB) spans 9–95; the sequence is ETLSLAIDSF…ALRSFLDWQV (87 aa). The 181-residue stretch at 116 to 296 folds into the Tyr recombinase domain; it reads HLPKNMDVDE…DFQHLAKVYD (181 aa). Active-site residues include R155, K179, H248, R251, and H274. Y283 (O-(3'-phospho-DNA)-tyrosine intermediate) is an active-site residue.

This sequence belongs to the 'phage' integrase family. XerC subfamily. As to quaternary structure, forms a cyclic heterotetrameric complex composed of two molecules of XerC and two molecules of XerD, in which XerC interacts with XerD via its C-terminal region, XerD interacts with XerC via its C-terminal region and so on.

It is found in the cytoplasm. With respect to regulation, ftsK may regulate the catalytic switch between XerC and XerD in the heterotetrameric complex during the two steps of the recombination process. Functionally, site-specific tyrosine recombinase, which acts by catalyzing the cutting and rejoining of the recombining DNA molecules. Binds cooperatively to specific DNA consensus sequences that are separated from XerD binding sites by a short central region, forming the heterotetrameric XerC-XerD complex that recombines DNA substrates. The complex is essential to convert dimers of the bacterial chromosome into monomers to permit their segregation at cell division. It also contributes to the segregational stability of plasmids. In the complex XerC specifically exchanges the top DNA strands. The chain is Tyrosine recombinase XerC from Proteus mirabilis.